Consider the following 402-residue polypeptide: Phosphoglycerate kinase (402 aa).

Residues 24-26 (DFN), arginine 40, 63-66 (HFGR), arginine 122, and arginine 155 contribute to the substrate site. ATP-binding positions include lysine 206, glycine 297, glutamate 328, and 357–360 (GGDS).

It belongs to the phosphoglycerate kinase family. As to quaternary structure, monomer.

It is found in the cytoplasm. The catalysed reaction is (2R)-3-phosphoglycerate + ATP = (2R)-3-phospho-glyceroyl phosphate + ADP. The protein operates within carbohydrate degradation; glycolysis; pyruvate from D-glyceraldehyde 3-phosphate: step 2/5. This chain is Phosphoglycerate kinase, found in Prochlorococcus marinus (strain SARG / CCMP1375 / SS120).